The chain runs to 337 residues: MTRHHQPRKGSVAFSPRKRVARETPRVSTWPELDEAGLLAFAGYKVGMTHVTALDSRKGSPTENMELSVPVTILEAPPLVVLGIRAYTKTTYGLKTLTDVIANDNLDDELSRKISVPKFDDIEAKIEELRNKIDDIDEIRVLIHTKPKLTSVPKKKPEVLEFGLGGKSVEDKLEYAISILGKEITPQDVFQEGEYTDAIATTKGKGVQGPVKRFGVRIQYGKAARSGIERHVGSIGPWTPNRTMWTVAMQGQMGYHKRTEYNKKLLKIGDESEVDLINPDGGFVKYGFVKNNYILVKGSLPGPSKRLVVLRKGVRNASKQVTAPEISYISTTSKQGV.

Positions 1–26 (MTRHHQPRKGSVAFSPRKRVARETPR) are disordered.

The protein belongs to the universal ribosomal protein uL3 family. In terms of assembly, part of the 50S ribosomal subunit. Forms a cluster with proteins L14 and L24e.

Functionally, one of the primary rRNA binding proteins, it binds directly near the 3'-end of the 23S rRNA, where it nucleates assembly of the 50S subunit. This Methanosphaera stadtmanae (strain ATCC 43021 / DSM 3091 / JCM 11832 / MCB-3) protein is Large ribosomal subunit protein uL3.